A 219-amino-acid chain; its full sequence is Ribose-5-phosphate isomerase A (219 aa).

Substrate contacts are provided by residues 28 to 31 (TGST), 81 to 84 (DGAD), and 94 to 97 (KGGG). Glutamate 103 functions as the Proton acceptor in the catalytic mechanism. Residue lysine 121 coordinates substrate.

This sequence belongs to the ribose 5-phosphate isomerase family. Homodimer.

The enzyme catalyses aldehydo-D-ribose 5-phosphate = D-ribulose 5-phosphate. It participates in carbohydrate degradation; pentose phosphate pathway; D-ribose 5-phosphate from D-ribulose 5-phosphate (non-oxidative stage): step 1/1. Functionally, catalyzes the reversible conversion of ribose-5-phosphate to ribulose 5-phosphate. The sequence is that of Ribose-5-phosphate isomerase A from Shigella boydii serotype 18 (strain CDC 3083-94 / BS512).